The chain runs to 946 residues: MKPLSSPLQQYWQTVVERLPELLAEESLSAQAKSVLTFSDFVQDSVIAHPEWLTELESQPPQADEWQHYSVWLQEALSNVSDEAGLMRELRLFRRRIMVRIAWAQTLALVTEESILQQLSYLAETLIVAARDWLYDACCREWGTPCNAQGEAQPLLILGMGKLGGGELNFSSDIDLIFAWPEHGCTQGGRRELDNAQFFTRMGQRLIKVLDQPTQDGFVYRVDMRLRPFGESGPLVLSFAALEDYYQEQGRDWERYAMVKARIMGDSEGVYANELRAMLRPFVFRRYIDFSVIQSLRNMKGMIAREVRRRGLTDNIKLGAGGIREIEFIVQVFQLIRGGREPLLQSRSLLPTLSAIAALHLLSENDAEQLRVAYLFLRRLENLLQSINDEQTQTLPSDELNRARLAWAMDFADWPQLTGALTAHMTNVRRVFNELIGDDESETQEESLSEQWRELWQDALQEDDTTPVLAHLSEDDRKQVLTMIADFRKELDKRTIGPRGRQVLDHLMPHLLSDVCAREDAAVTLSRITALLVGIVTRTTYLELLSEFPAALKHLISLCAASPMIASQLARYPLLLDELLDPNTLYQPTATDAYRDELRQYLLRVPEDDEEQQLEALRQFKQAQLLRIAAADIAGTLPVMKVSDHLTWLAEAMIDAVVQQAWGQMVARYGKPNHLNEREGRGFAVVGYGKLGGWELGYSSDLDLIFLHDCPMDAMTDGEREIDGRQFYLRLAQRIMHLFSTRTSSGILYEVDARLRPSGAAGMLVTSAEAFADYQKNEAWTWEHQALVRARVVYGDPQLTAHFDAVRREIMTLPREGKTLQTEVREMREKMRAHLGNKHRNRFDIKADEGGITDIEFITQYLVLRYAHEKPKLTRWSDNVRILELLAQNDIMEEQEAMALTRAYTTLRDELHHLALQELPGHVSEDCFTAERDLVRASWQKWLVEE.

The adenylyl removase stretch occupies residues 1 to 440 (MKPLSSPLQQ…VFNELIGDDE (440 aa)). The adenylyl transferase stretch occupies residues 449–946 (SEQWRELWQD…ASWQKWLVEE (498 aa)).

This sequence belongs to the GlnE family. Mg(2+) is required as a cofactor.

It carries out the reaction [glutamine synthetase]-O(4)-(5'-adenylyl)-L-tyrosine + phosphate = [glutamine synthetase]-L-tyrosine + ADP. It catalyses the reaction [glutamine synthetase]-L-tyrosine + ATP = [glutamine synthetase]-O(4)-(5'-adenylyl)-L-tyrosine + diphosphate. Functionally, involved in the regulation of glutamine synthetase GlnA, a key enzyme in the process to assimilate ammonia. When cellular nitrogen levels are high, the C-terminal adenylyl transferase (AT) inactivates GlnA by covalent transfer of an adenylyl group from ATP to specific tyrosine residue of GlnA, thus reducing its activity. Conversely, when nitrogen levels are low, the N-terminal adenylyl removase (AR) activates GlnA by removing the adenylyl group by phosphorolysis, increasing its activity. The regulatory region of GlnE binds the signal transduction protein PII (GlnB) which indicates the nitrogen status of the cell. This chain is Bifunctional glutamine synthetase adenylyltransferase/adenylyl-removing enzyme, found in Shigella flexneri.